Here is a 160-residue protein sequence, read N- to C-terminus: Ureidoglycolate lyase (160 aa).

Belongs to the ureidoglycolate lyase family. As to quaternary structure, homodimer. The cofactor is Ni(2+).

The enzyme catalyses (S)-ureidoglycolate = urea + glyoxylate. Its pathway is nitrogen metabolism; (S)-allantoin degradation. Functionally, catalyzes the catabolism of the allantoin degradation intermediate (S)-ureidoglycolate, generating urea and glyoxylate. Involved in the anaerobic utilization of allantoin as sole nitrogen source. Reinforces the induction of genes involved in the degradation of allantoin and glyoxylate by producing glyoxylate. The protein is Ureidoglycolate lyase of Escherichia coli O127:H6 (strain E2348/69 / EPEC).